Consider the following 311-residue polypeptide: uncharacterized protein (311 aa).

This is an uncharacterized protein from Bacillus anthracis.